The sequence spans 159 residues: Deoxyuridine 5'-triphosphate nucleotidohydrolase (159 aa).

Residues serine 79, glycine 92, aspartate 95, tyrosine 98, lysine 103, arginine 148, phenylalanine 153, and glycine 154 each contribute to the dUMP site.

The protein belongs to the dUTPase family. In terms of assembly, homotrimer. Mg(2+) is required as a cofactor.

It catalyses the reaction dUTP + H2O = dUMP + diphosphate + H(+). Its pathway is pyrimidine metabolism; dUMP biosynthesis; dUMP from dCTP (dUTP route): step 2/2. Its function is as follows. Involved in nucleotide metabolism via production of dUMP, the immediate precursor of thymidine nucleotides, and decreases the intracellular concentration of dUTP so that uracil cannot be incorporated into DNA. The protein is Deoxyuridine 5'-triphosphate nucleotidohydrolase (DUT1) of Candida albicans (strain SC5314 / ATCC MYA-2876) (Yeast).